A 103-amino-acid polypeptide reads, in one-letter code: MTGRGKGGKGLGKGGAKRHRKVLRDNIQGITKPAIRRLARRGGVKRISGLIYEETRGVLKVFLENVIRDAVTYTEHAKRKTVTAMDVVYALKRXXXTLYGFGG.

Residues 1 to 14 are compositionally biased toward gly residues; sequence MTGRGKGGKGLGKG. The tract at residues 1-20 is disordered; that stretch reads MTGRGKGGKGLGKGGAKRHR. Thr-2 carries the post-translational modification N-acetylthreonine. Lys-6 carries the post-translational modification N6-acetyl-N6-methyllysine; alternate. N6-acetyllysine is present on residues Lys-6, Lys-9, Lys-13, and Lys-17. Lys-13 bears the N6-acetyl-N6-methyllysine; alternate mark. The residue at position 21 (Lys-21) is an N6,N6-dimethyllysine. Lys-32 is subject to N6-methyllysine.

This sequence belongs to the histone H4 family. In terms of assembly, the nucleosome is a histone octamer containing two molecules each of H2A, H2B, H3 and H4 assembled in one H3-H4 heterotetramer and two H2A-H2B heterodimers. The octamer wraps approximately 147 bp of DNA.

The protein resides in the nucleus. Its subcellular location is the chromosome. Core component of nucleosome. Nucleosomes wrap and compact DNA into chromatin, limiting DNA accessibility to the cellular machineries which require DNA as a template. Histones thereby play a central role in transcription regulation, DNA repair, DNA replication and chromosomal stability. DNA accessibility is regulated via a complex set of post-translational modifications of histones, also called histone code, and nucleosome remodeling. In terms of biological role, a mixture of histones H2B and H4 has antimicrobial activity against the Gram-positive bacterium M.luteus. This Penaeus vannamei (Whiteleg shrimp) protein is Histone H4.